The following is a 77-amino-acid chain: Probable Vpr-like protein (77 aa).

Residues 34–42 carry the Nuclear export signal motif; that stretch reads LIRLLQGLL. Residues 44–53 carry the Nuclear localization signal motif; the sequence is RLRFRKPKSK.

It is found in the virion. It localises to the host nucleus. Functionally, seems to function as a Vpr-like protein, since it mediates host cell cycle arrest in G2 phase. Cell cycle arrest creates a favorable environment for maximizing viral expression and production. The polypeptide is Probable Vpr-like protein (Felidae (cat family)).